The following is a 192-amino-acid chain: Orotate phosphoribosyltransferase (192 aa).

116–124 is a binding site for 5-phospho-alpha-D-ribose 1-diphosphate; it reads EDIVTTGLS. Threonine 120 and arginine 148 together coordinate orotate.

This sequence belongs to the purine/pyrimidine phosphoribosyltransferase family. PyrE subfamily. In terms of assembly, homodimer. It depends on Mg(2+) as a cofactor.

The enzyme catalyses orotidine 5'-phosphate + diphosphate = orotate + 5-phospho-alpha-D-ribose 1-diphosphate. It functions in the pathway pyrimidine metabolism; UMP biosynthesis via de novo pathway; UMP from orotate: step 1/2. Catalyzes the transfer of a ribosyl phosphate group from 5-phosphoribose 1-diphosphate to orotate, leading to the formation of orotidine monophosphate (OMP). The sequence is that of Orotate phosphoribosyltransferase from Bartonella henselae (strain ATCC 49882 / DSM 28221 / CCUG 30454 / Houston 1) (Rochalimaea henselae).